Consider the following 553-residue polypeptide: Glutamine--tRNA ligase (553 aa).

The 'HIGH' region signature appears at 34–44 (PEPNGYLHIGH). Residues 35–37 (EPN) and 41–47 (HIGHAKS) each bind ATP. Residues Asp68 and Tyr213 each coordinate L-glutamine. Residues Thr232 and 262–263 (RL) contribute to the ATP site. The 'KMSKS' region motif lies at 269-273 (LTSKR).

It belongs to the class-I aminoacyl-tRNA synthetase family. Monomer.

Its subcellular location is the cytoplasm. The enzyme catalyses tRNA(Gln) + L-glutamine + ATP = L-glutaminyl-tRNA(Gln) + AMP + diphosphate. In Psychromonas ingrahamii (strain DSM 17664 / CCUG 51855 / 37), this protein is Glutamine--tRNA ligase.